A 196-amino-acid polypeptide reads, in one-letter code: SAGA-associated factor 11 homolog (196 aa).

The interval 1–22 (MSAANMPTTTGAQGSGNQVPTT) is disordered. The SGF11-type zinc-finger motif lies at 106 to 127 (CTCPNCDRLVAAARFAPHLEKC). Residues 144 to 196 (TKEGATSAHLHSAGNTGGTDDEDDVDWSSDKRRKKSNQNSRNNGSKKNNGKSF) are disordered. Phosphoserine is present on S172. The span at 180-196 (NQNSRNNGSKKNNGKSF) shows a compositional bias: low complexity.

The protein belongs to the SGF11 family. As to quaternary structure, component of some SAGA transcription coactivator-HAT complexes, at least composed of Ada2b, not/nonstop, Pcaf/Gcn5, Sgf11 and Spt3. Within the SAGA complex, Sgf11, e(y)2, and not/nonstop form an additional subcomplex of SAGA called the DUB module (deubiquitination module). Interacts directly with not/nonstop. Interacts with the AMEX complex component xmas-2. Interacts with Cbp80; important for promoter recruitment of Sgf11 that is not associated with the DUB module.

It is found in the nucleus. The protein localises to the nucleoplasm. The protein resides in the cytoplasm. Component of the transcription regulatory histone acetylation (HAT) complex SAGA, a multiprotein complex that activates transcription by remodeling chromatin and mediating histone acetylation and deubiquitination. Within the SAGA complex, participates in a subcomplex that specifically deubiquitinates histone H2B. The SAGA complex is recruited to specific gene promoters by activators, where it is required for transcription. Required for nuclear receptor-mediated transactivation. Binds independently on SAGA to promoters in an RNA-dependent manner. Binds to mRNA and is essential for total mRNA export from the nucleus. Required to counteract heterochromatin silencing. Controls the development of neuronal connectivity in visual system by being required for accurate axon targeting in the optic lobe. Required for expression of ecdysone-induced genes such as br/broad. In Drosophila erecta (Fruit fly), this protein is SAGA-associated factor 11 homolog.